Here is a 302-residue protein sequence, read N- to C-terminus: Spermidine synthase (302 aa).

Position 1 is an N-acetylmethionine (methionine 1). The 236-residue stretch at 18-253 folds into the PABS domain; that stretch reads EGWFRETCSL…GQIGFMLCSK (236 aa). Glutamine 49 contributes to the S-adenosyl 3-(methylsulfanyl)propylamine binding site. Residue tyrosine 79 coordinates putrescine. S-adenosyl 3-(methylsulfanyl)propylamine is bound by residues glutamine 80, aspartate 104, glutamate 124, 155–156, and aspartate 173; that span reads DG. Catalysis depends on aspartate 173, which acts as the Proton acceptor. Residues 173-176 and tyrosine 241 contribute to the putrescine site; that span reads DSSD.

It belongs to the spermidine/spermine synthase family. In terms of assembly, homodimer or homotetramer.

The enzyme catalyses S-adenosyl 3-(methylsulfanyl)propylamine + putrescine = S-methyl-5'-thioadenosine + spermidine + H(+). It participates in amine and polyamine biosynthesis; spermidine biosynthesis; spermidine from putrescine: step 1/1. With respect to regulation, the activity is thought to be regulated mainly by the availability of decarboxylated S-adenosylmethionine. In terms of biological role, catalyzes the production of spermidine from putrescine and decarboxylated S-adenosylmethionine (dcSAM). Has a strong preference for putrescine as substrate, and has very low activity towards 1,3-diaminopropane. Has extremely low activity towards spermidine. The chain is Spermidine synthase (Srm) from Mus musculus (Mouse).